A 523-amino-acid polypeptide reads, in one-letter code: ADP-ribosylation factor GTPase-activating protein 3 (523 aa).

The Arf-GAP domain occupies 10 to 126; it reads LAIFKRLRSV…IKTLATQATR (117 aa). Residues 25–48 form a C4-type zinc finger; that stretch reads CFDCGAKNPSWASISYGVFLCIDC. Positions 162-206 are disordered; the sequence is GAMQASAQPESASSTPWGLETTPEKHEGGPGQGPSVEGLNTPGKA. Residues 164-177 show a composition bias toward polar residues; sequence MQASAQPESASSTP. 2 positions are modified to phosphoserine: Ser-231 and Ser-241. Residues 248 to 269 form a disordered region; that stretch reads QAQAVDKRKEQEDLARGAPKEE. Phosphoserine occurs at positions 270, 274, and 331. A disordered region spans residues 308-424; sequence GFGSCRSGIS…YEPIGSTDEA (117 aa). The span at 314 to 332 shows a compositional bias: polar residues; it reads SGISHSVTSDMQTIEQESP. Positions 348–361 are enriched in low complexity; that stretch reads SYFSSSSKWSEQSS. Position 377 is a phosphoserine (Ser-377). Residues 385 to 396 show a composition bias toward basic and acidic residues; the sequence is YWKKDSSRDPEP. Phosphoserine occurs at positions 435, 458, 460, 462, 464, and 465.

It is found in the cytoplasm. The protein resides in the golgi apparatus membrane. With respect to regulation, GAP activity stimulated by phosphatidylinositol 4,5-bisphosphate (PIP2). Its function is as follows. GTPase-activating protein (GAP) for ADP ribosylation factor 1 (ARF1). Hydrolysis of ARF1-bound GTP may lead to dissociation of coatomer from Golgi-derived membranes to allow fusion with target membranes. In Mus musculus (Mouse), this protein is ADP-ribosylation factor GTPase-activating protein 3 (Arfgap3).